Consider the following 445-residue polypeptide: Exodeoxyribonuclease 7 large subunit (445 aa).

Belongs to the XseA family. Heterooligomer composed of large and small subunits.

It localises to the cytoplasm. It catalyses the reaction Exonucleolytic cleavage in either 5'- to 3'- or 3'- to 5'-direction to yield nucleoside 5'-phosphates.. Its function is as follows. Bidirectionally degrades single-stranded DNA into large acid-insoluble oligonucleotides, which are then degraded further into small acid-soluble oligonucleotides. This Nautilia profundicola (strain ATCC BAA-1463 / DSM 18972 / AmH) protein is Exodeoxyribonuclease 7 large subunit.